Consider the following 368-residue polypeptide: Propane 2-monooxygenase, hydroxylase component small subunit (368 aa).

Residues 1–17 (MSAPEKPRERSFPKIEF) are compositionally biased toward basic and acidic residues. Residues 1–32 (MSAPEKPRERSFPKIEFTDSEAGAKEFPSSKS) form a disordered region.

This sequence belongs to the TmoE/XamoE family. The propane 2-monooxygenase multicomponent enzyme system is composed of an electron transfer component and a monooxygenase component interacting with the effector protein MimD. The electron transfer component is composed of a reductase (MimB), and the monooxygenase component is formed by a large subunit (MimA) and a small subunit (MimC). Requires the presence of the chaperonin-like protein MimG to ensure a productive folding, resulting of a soluble MimC, which leads to the active form of MimABCD.

The catalysed reaction is propane + NADH + O2 + H(+) = propan-2-ol + NAD(+) + H2O. The enzyme catalyses acetone + NADH + O2 + H(+) = hydroxyacetone + NAD(+) + H2O. It catalyses the reaction butan-2-one + NADH + O2 + H(+) = 1-hydroxy-2-butanone + NAD(+) + H2O. It carries out the reaction phenol + NADH + O2 + H(+) = hydroquinone + NAD(+) + H2O. In terms of biological role, component of the propane 2-monooxygenase multicomponent enzyme system which is involved in the degradation of propane via the O2-dependent hydroxylation of propane. Also involved in the degradation of acetone via the O2-dependent hydroxylation of acetone. Also able to catalyze the oxidation of phenol, methylethylketone (2-butanone), 1-propanol and 2-propanol. In Mycolicibacterium smegmatis (strain ATCC 700084 / mc(2)155) (Mycobacterium smegmatis), this protein is Propane 2-monooxygenase, hydroxylase component small subunit.